The sequence spans 300 residues: MDWFHCNQCFRKDGAHFFVTSCGHIFCKKCVTLEKCAVCGTACKHLALSDNLKPQEKMFFKSPVETALQYFSHISQVWSFQKKQTDLLIAFYKHRITKLETAMQEAQQALVSQDKELSVLRKENGELKKFLAILKESPSRYQGSRSITPRPVGITSPSQSVTPRPSFQHSSQVVSRSSSAESIPYREAGFGSLGQGGRGLQGRRTPRDSYNETPSPASTHSLSYRTSSASSGQGIFSFRPSPNGHSGHTRVLTPNNFAQRESTTTLESLPSFQLPVLQTLYQQRRHMGLPSGREAWTTSR.

Residues 6 to 40 form an RING-type zinc finger; sequence CNQCFRKDGAHFFVTSCGHIFCKKCVTLEKCAVCG. A coiled-coil region spans residues 87-124; it reads LLIAFYKHRITKLETAMQEAQQALVSQDKELSVLRKEN. The segment at 141–232 is disordered; it reads YQGSRSITPR…SYRTSSASSG (92 aa). Over residues 155–165 the composition is skewed to polar residues; sequence TSPSQSVTPRP. Over residues 166–182 the composition is skewed to low complexity; it reads SFQHSSQVVSRSSSAES. The segment covering 191–200 has biased composition (gly residues); that stretch reads GSLGQGGRGL. Over residues 211–232 the composition is skewed to polar residues; the sequence is NETPSPASTHSLSYRTSSASSG.

As to quaternary structure, homodimer. In terms of processing, autoubiquitinated.

Its subcellular location is the chromosome. The catalysed reaction is S-ubiquitinyl-[E2 ubiquitin-conjugating enzyme]-L-cysteine + [acceptor protein]-L-lysine = [E2 ubiquitin-conjugating enzyme]-L-cysteine + N(6)-ubiquitinyl-[acceptor protein]-L-lysine.. It functions in the pathway protein modification; protein ubiquitination. Functionally, ubiquitin E3 ligase that acts as a crucial factor for crossing-over (CO) formation during meiosis. Essential for normal prophase I progression and for ensuring appropriate CO designation in meiosis. Recruits key components of the cross-over machinery either directly ou indirectly, leading to the activation of the MutL-gamma complex. The function of RNF212B in CO designation is dependent on its catalytic activity. The chain is E3 ubiquitin-protein ligase RNF212B (RNF212B) from Homo sapiens (Human).